The chain runs to 173 residues: Translation initiation factor IF-3 (173 aa).

It belongs to the IF-3 family. As to quaternary structure, monomer.

It localises to the cytoplasm. In terms of biological role, IF-3 binds to the 30S ribosomal subunit and shifts the equilibrium between 70S ribosomes and their 50S and 30S subunits in favor of the free subunits, thus enhancing the availability of 30S subunits on which protein synthesis initiation begins. The polypeptide is Translation initiation factor IF-3 (Clostridium tetani (strain Massachusetts / E88)).